Here is a 215-residue protein sequence, read N- to C-terminus: Autophagy-related protein 101 (215 aa).

Positions 124–147 (PVGKSHHSKLVMDPGEASEERSSR) are disordered.

It belongs to the ATG101 family. Interacts with ATG11 and ATG13A.

It is found in the cytoplasmic vesicle. It localises to the autophagosome. Functionally, accessory protein involved in autophagy. Acts as a scaffold protein of the ATG1-ATG13 complex for faithful delivery of autophagic vesicles to the vacuole. Required for selective mitophagy. The polypeptide is Autophagy-related protein 101 (Arabidopsis thaliana (Mouse-ear cress)).